We begin with the raw amino-acid sequence, 438 residues long: Protein kinase PINOID (438 aa).

The interval M1–S24 is disordered. Polar residues predominate over residues L11–S24. The region spanning F75–F394 is the Protein kinase domain. Residues I81–V89 and K109 each bind ATP. The Proton acceptor role is filled by D205. The region spanning K395 to F438 is the AGC-kinase C-terminal domain.

Belongs to the protein kinase superfamily. Ser/Thr protein kinase family. As to quaternary structure, interacts with PDK1, CML12 and PBP1. Component of a complex made of PINs (e.g. PIN1 and PIN2), MAB4/MELs (e.g. NPY1/MAB4 and NPY5/MEL1) and AGC kinases (e.g. D6PK and PID) at the plasma membrane. Binds directly to PIN2, NPY1/MAB4 and NPY5/MEL1. Post-translationally, autophosphorylated. Phosphorylated by PDK1. As to expression, expressed in root hair cells, shoot xylem parenchyma cells and endodermis around the vasculature. Expressed in anther primordia, vasculature of the growing flower stalk, young pedicels and bracts and developing sepals, but not in petals. In pistils, transiently expressed in the vasculature of the style and the septum, and in the integuments and funiculus of the developing ovule.

The protein resides in the cytoplasm. Its subcellular location is the cytosol. It is found in the cell membrane. It carries out the reaction L-seryl-[protein] + ATP = O-phospho-L-seryl-[protein] + ADP + H(+). It catalyses the reaction L-threonyl-[protein] + ATP = O-phospho-L-threonyl-[protein] + ADP + H(+). Its activity is regulated as follows. Activated by magnesium and PDK1. Inhibited by staurosporine. Repressed by calcium. Its function is as follows. Serine/threonine-protein kinase involved in the regulation of auxin signaling. Acts as a positive regulator of cellular auxin efflux and regulates organ development by enhancing polar auxin transport. Phosphorylates conserved serine residues in the PIN auxin efflux carriers. Phosphorylation of PIN proteins is required and sufficient for apical-basal PIN polarity that enables directional intercellular auxin fluxes, which mediate differential growth, tissue patterning and organogenesis. Phosphorylates PIN proteins (e.g. PIN1 and PIN2), especially when NPY proteins (e.g. NPY1/MAB4 and NPY5/MEL1) are recruited at the plasma membrane; this enhances the polarized localizations (apical or basal) of PINs in the cell by limiting their lateral diffusion-based escape. Acts in association with PIN1 to control the establishment of bilateral symmetry and promotion of cotyledon outgrowth. Regulates root gravitropism through modulation of PIN2-dependent basipetal auxin transport. Required for polarization of PIN3-dependent auxin transport for hypocotyl gravitropic response. The protein kinase activity of PID is essential for its auxin efflux regulatory function. PID kinase and PP2A phosphatase activities antagonistically regulate phosphorylation of PIN proteins, affecting PIN sorting. This Arabidopsis thaliana (Mouse-ear cress) protein is Protein kinase PINOID.